We begin with the raw amino-acid sequence, 900 residues long: Phosphoenolpyruvate carboxylase (900 aa).

Catalysis depends on residues His140 and Lys568.

It belongs to the PEPCase type 1 family. The cofactor is Mg(2+).

The enzyme catalyses oxaloacetate + phosphate = phosphoenolpyruvate + hydrogencarbonate. Forms oxaloacetate, a four-carbon dicarboxylic acid source for the tricarboxylic acid cycle. This Neisseria gonorrhoeae (strain ATCC 700825 / FA 1090) protein is Phosphoenolpyruvate carboxylase.